Consider the following 318-residue polypeptide: Aspartate carbamoyltransferase catalytic subunit (318 aa).

Arg-58 and Thr-59 together coordinate carbamoyl phosphate. Lys-86 is a binding site for L-aspartate. The carbamoyl phosphate site is built by Arg-108, His-141, and Gln-144. The L-aspartate site is built by Arg-174 and Arg-226. Carbamoyl phosphate is bound by residues Gly-270 and Pro-271.

It belongs to the aspartate/ornithine carbamoyltransferase superfamily. ATCase family. In terms of assembly, heterododecamer (2C3:3R2) of six catalytic PyrB chains organized as two trimers (C3), and six regulatory PyrI chains organized as three dimers (R2).

It catalyses the reaction carbamoyl phosphate + L-aspartate = N-carbamoyl-L-aspartate + phosphate + H(+). It participates in pyrimidine metabolism; UMP biosynthesis via de novo pathway; (S)-dihydroorotate from bicarbonate: step 2/3. Functionally, catalyzes the condensation of carbamoyl phosphate and aspartate to form carbamoyl aspartate and inorganic phosphate, the committed step in the de novo pyrimidine nucleotide biosynthesis pathway. This chain is Aspartate carbamoyltransferase catalytic subunit, found in Lactobacillus acidophilus (strain ATCC 700396 / NCK56 / N2 / NCFM).